Here is a 449-residue protein sequence, read N- to C-terminus: Phosphoglucosamine mutase (449 aa).

Serine 104 serves as the catalytic Phosphoserine intermediate. Mg(2+)-binding residues include serine 104, aspartate 243, aspartate 245, and aspartate 247. Serine 104 carries the post-translational modification Phosphoserine.

Belongs to the phosphohexose mutase family. Mg(2+) is required as a cofactor. Activated by phosphorylation.

The enzyme catalyses alpha-D-glucosamine 1-phosphate = D-glucosamine 6-phosphate. Catalyzes the conversion of glucosamine-6-phosphate to glucosamine-1-phosphate. This is Phosphoglucosamine mutase from Xanthomonas oryzae pv. oryzae (strain PXO99A).